A 419-amino-acid chain; its full sequence is Protein FAM181B (419 aa).

Residues 107–157 (LMGAAPPGPSSPGAADTPAKRPLAGAQTVPVPVPAHGKAAPRREASQAAAA) form a disordered region.

It belongs to the FAM181 family.

This is Protein FAM181B (FAM181B) from Bos taurus (Bovine).